The chain runs to 311 residues: Malate dehydrogenase (311 aa).

Residues 7 to 13 (GAAGGIG) and Asp-34 each bind NAD(+). Substrate contacts are provided by Arg-81 and Arg-87. Residues Asn-94 and 117–119 (ITN) each bind NAD(+). 2 residues coordinate substrate: Asn-119 and Arg-153. The Proton acceptor role is filled by His-177. Met-227 is a binding site for NAD(+).

This sequence belongs to the LDH/MDH superfamily. MDH type 1 family. In terms of assembly, homodimer.

The catalysed reaction is (S)-malate + NAD(+) = oxaloacetate + NADH + H(+). Functionally, catalyzes the reversible oxidation of malate to oxaloacetate. The protein is Malate dehydrogenase of Shewanella baltica (strain OS155 / ATCC BAA-1091).